We begin with the raw amino-acid sequence, 423 residues long: tRNA(Ile)-lysidine synthase (423 aa).

29–34 (SGGKDS) contacts ATP.

It belongs to the tRNA(Ile)-lysidine synthase family.

The protein resides in the cytoplasm. The enzyme catalyses cytidine(34) in tRNA(Ile2) + L-lysine + ATP = lysidine(34) in tRNA(Ile2) + AMP + diphosphate + H(+). Its function is as follows. Ligates lysine onto the cytidine present at position 34 of the AUA codon-specific tRNA(Ile) that contains the anticodon CAU, in an ATP-dependent manner. Cytidine is converted to lysidine, thus changing the amino acid specificity of the tRNA from methionine to isoleucine. In Lactococcus lactis subsp. lactis (strain IL1403) (Streptococcus lactis), this protein is tRNA(Ile)-lysidine synthase.